Consider the following 391-residue polypeptide: Protein kinase ORF14 (391 aa).

One can recognise a Protein kinase domain in the interval 109–391; the sequence is VPLRHTRGNI…ETLVDEFSKI (283 aa). Lys-134 contributes to the ATP binding site. The Proton acceptor role is filled by Asp-235.

Belongs to the protein kinase superfamily. Ser/Thr protein kinase family.

It carries out the reaction L-seryl-[protein] + ATP = O-phospho-L-seryl-[protein] + ADP + H(+). It catalyses the reaction L-threonyl-[protein] + ATP = O-phospho-L-threonyl-[protein] + ADP + H(+). This is Protein kinase ORF14 (ORF14) from Ictalurid herpesvirus 1 (strain Auburn) (IcHV-1).